The primary structure comprises 325 residues: ADP-L-glycero-D-manno-heptose-6-epimerase (325 aa).

NADP(+) contacts are provided by residues Phe10–Ile11, Asp31–Asp32, Lys38, and Glu75–Ser79. Catalysis depends on Tyr139, which acts as the Proton acceptor. Lys143 lines the NADP(+) pocket. Asn167 contributes to the substrate binding site. Val168 and Lys176 together coordinate NADP(+). Lys176 (proton acceptor) is an active-site residue. Residues Ser178, His185, Phe199–Ser202, Arg212, and Tyr285 contribute to the substrate site.

The protein belongs to the NAD(P)-dependent epimerase/dehydratase family. HldD subfamily. As to quaternary structure, homopentamer. Requires NADP(+) as cofactor.

It carries out the reaction ADP-D-glycero-beta-D-manno-heptose = ADP-L-glycero-beta-D-manno-heptose. It participates in nucleotide-sugar biosynthesis; ADP-L-glycero-beta-D-manno-heptose biosynthesis; ADP-L-glycero-beta-D-manno-heptose from D-glycero-beta-D-manno-heptose 7-phosphate: step 4/4. Functionally, catalyzes the interconversion between ADP-D-glycero-beta-D-manno-heptose and ADP-L-glycero-beta-D-manno-heptose via an epimerization at carbon 6 of the heptose. The polypeptide is ADP-L-glycero-D-manno-heptose-6-epimerase (Azoarcus sp. (strain BH72)).